Here is a 320-residue protein sequence, read N- to C-terminus: Zona pellucida-binding protein 1 (320 aa).

Residues N85 and N158 are each glycosylated (N-linked (GlcNAc...) asparagine).

This sequence belongs to the zona pellucida-binding protein Sp38 family.

Its subcellular location is the cytoplasmic vesicle. It localises to the secretory vesicle. The protein localises to the acrosome. It is found in the secreted. The protein resides in the acrosome membrane. In terms of biological role, plays a role in sperm morphogenesis and in sperm-oocyte interaction during fertilization. This chain is Zona pellucida-binding protein 1 (ZPBP1), found in Gallus gallus (Chicken).